Here is a 118-residue protein sequence, read N- to C-terminus: Movement protein TGB2 (118 aa).

At 1 to 11 the chain is on the cytoplasmic side; sequence MSREITARPNK. The chain crosses the membrane as a helical span at residues 12-32; sequence NVPIVVGVCVVAFFVLLAFMQ. At 33–81 the chain is on the lumenal side; that stretch reads QKHKTHSGGDYGVPTFSNGGKYRDGTRSADFNSNNHRAYGCGGSGGSVS. A helical transmembrane segment spans residues 82-102; it reads SRVGQQLVVLAIVSVLIVSLL. Residues 103-118 lie on the Cytoplasmic side of the membrane; it reads QRLRSPPEHICNGACG.

This sequence belongs to the virgaviridae/benyvirus TGB2 movement protein family. In terms of assembly, interacts with movement protein TGB3.

It is found in the host cell junction. The protein resides in the host plasmodesma. It localises to the host endoplasmic reticulum membrane. Participates in the transport of viral RNA to the plasmodesmata. Is probably targeted to plasmodesmata by TGBp3, along with viral RNAs-TGBp1 (RNP complex). Can gate plasmodesmata and increase their size exclusion limit. This is Movement protein TGB2 from Beet necrotic yellow vein virus (isolate Japan/S) (BNYVV).